Here is a 279-residue protein sequence, read N- to C-terminus: GDSRRPIWNIAHMVNDLDLVDEYLDDGANSLELDVEFSKSGTALRTYHGVPCDCFRSCTRSEKFSKYLDYIRQLTTPGNSKFRSRLILLVLDLKLNPLSSSAAYNAGADVARNLLDNYWQRGDSKARAYIVLSLETIAGAEFITGFKDTMKKEGFDEKYYDKIGWDFSGNEDLGKIRDVLESHGIREHIWQGDGITNCLPRDDNRLKQAISRRYSPTYVYADKVYTWSIDKESSIENALRLGVDGVMTNYPARVISVLGEREFSGKLRLATYDDNPWEK.

The active site involves His12. 2 residues coordinate Mg(2+): Glu32 and Asp34. The active-site Nucleophile is the His48. Disulfide bonds link Cys52–Cys58 and Cys54–Cys198. Asp92 contacts Mg(2+).

The protein belongs to the arthropod phospholipase D family. Class II subfamily. Class IIb sub-subfamily. Mg(2+) serves as cofactor. As to expression, expressed by the venom gland.

The protein resides in the secreted. It carries out the reaction an N-(acyl)-sphingosylphosphocholine = an N-(acyl)-sphingosyl-1,3-cyclic phosphate + choline. It catalyses the reaction N-hexanoyl-sphing-4-enine-1-phosphocholine = N-(hexanoyl)-sphing-4-enine-1,3-cyclic phosphate + choline. The enzyme catalyses an N-(acyl)-sphingosylphosphoethanolamine = an N-(acyl)-sphingosyl-1,3-cyclic phosphate + ethanolamine. The catalysed reaction is N-dodecanoyl-heptadecasphing-4-enine-1-phosphoethanolamine = N-dodecanoyl-heptadecasphing-4-enine-1,3-cyclic phosphate + ethanolamine. It carries out the reaction a 1-acyl-sn-glycero-3-phosphoethanolamine = a 1-acyl-sn-glycero-2,3-cyclic phosphate + ethanolamine. It catalyses the reaction 1-tetradecanoyl-sn-glycero-3-phosphoethanolamine = 1-tetradecanoyl-sn-glycero-2,3-cyclic phosphate + ethanolamine. Its function is as follows. Dermonecrotic toxins cleave the phosphodiester linkage between the phosphate and headgroup of certain phospholipids (sphingolipid and lysolipid substrates), forming an alcohol (often choline) and a cyclic phosphate. This toxin acts on lysophosphatidylethanolamine (LPE) and ceramide phosphoethanolamine (CPE) with high activity. This toxin acts on sphingomyelin (SM) with very low activity and is not active on lysophosphatidylserine (LPS), lysophosphatidylcholine (LPC) and lysophosphatidylglycerol (LPG). It acts by transphosphatidylation, releasing exclusively cyclic phosphate as second products. It is not surprising that spider toxins have affinity for ethanolamine-containing sphingolipids since they are common in insect prey. Induces dermonecrosis, hemolysis, increased vascular permeability, edema, inflammatory response, and platelet aggregation. In Sicarius terrosus (Cave spider), this protein is Dermonecrotic toxin StSicTox-betaIB1i.